A 167-amino-acid polypeptide reads, in one-letter code: MAGTNPRAARIAALIQRVIASSMEAQLHDKRLANVTITEVRVTNDLQIAKVYWTQLGHEGHEQGERRRAQQALNQAKGRLRSLVGTKAGLRLTPQLEFIFDEVPGEAHEIEDILALAHKRDEELAKSRANAQYAGDADPYKHDEPDDDDFDDDDDVEVEDWDDDDEA.

Residues Ser127 to Ala167 are disordered. Residues Pro145 to Ala167 show a composition bias toward acidic residues.

Belongs to the RbfA family. As to quaternary structure, monomer. Binds 30S ribosomal subunits, but not 50S ribosomal subunits or 70S ribosomes.

It is found in the cytoplasm. One of several proteins that assist in the late maturation steps of the functional core of the 30S ribosomal subunit. Associates with free 30S ribosomal subunits (but not with 30S subunits that are part of 70S ribosomes or polysomes). Required for efficient processing of 16S rRNA. May interact with the 5'-terminal helix region of 16S rRNA. The polypeptide is Ribosome-binding factor A (Bifidobacterium adolescentis (strain ATCC 15703 / DSM 20083 / NCTC 11814 / E194a)).